The primary structure comprises 697 residues: T-related protein (697 aa).

Residues 1-60 (MTTSHILSAVDPTTGLSGNVSGGGGGGGAGGGAGSGSPQHVTHNGHGHGHGLGGVAAVSG) form a disordered region. 2 stretches are compositionally biased toward gly residues: residues 20–35 (VSGG…GAGS) and 50–60 (HGLGGVAAVSG). Residues 96–264 (LWLRFQNLTN…YNPFAKAFLD (169 aa)) constitute a DNA-binding region (T-box). The segment covering 316–330 (SVSSAESVGPSSGGS) has biased composition (low complexity). Disordered stretches follow at residues 316-407 (SVSS…GGIG) and 462-488 (VCSG…TSSP). Over residues 337–351 (SLSSRSVAPTRTTPY) the composition is skewed to polar residues. 3 stretches are compositionally biased toward low complexity: residues 352–373 (SRPR…SSTS), 381–401 (QTPT…VSSS), and 469–488 (SSHN…TSSP).

It localises to the nucleus. Its function is as follows. Required for the specification of the hindgut and anal pads. The polypeptide is T-related protein (byn) (Drosophila melanogaster (Fruit fly)).